The following is a 681-amino-acid chain: Methionine--tRNA ligase (681 aa).

The 'HIGH' region signature appears at 15-25 (PYANGPIHLGH). The Zn(2+) site is built by cysteine 146, cysteine 149, cysteine 159, and cysteine 162. The 'KMSKS' region signature appears at 332–336 (KMSKS). Lysine 335 is an ATP binding site. Positions 547–569 (DNMAQAPKDNGKAKKDKKEAKSE) are disordered. Basic and acidic residues predominate over residues 555-569 (DNGKAKKDKKEAKSE). Positions 580–681 (DFAKIDLRIA…SGAQPGMQVK (102 aa)) constitute a tRNA-binding domain.

Belongs to the class-I aminoacyl-tRNA synthetase family. MetG type 1 subfamily. In terms of assembly, homodimer. Requires Zn(2+) as cofactor.

It localises to the cytoplasm. The enzyme catalyses tRNA(Met) + L-methionine + ATP = L-methionyl-tRNA(Met) + AMP + diphosphate. Its function is as follows. Is required not only for elongation of protein synthesis but also for the initiation of all mRNA translation through initiator tRNA(fMet) aminoacylation. In Hahella chejuensis (strain KCTC 2396), this protein is Methionine--tRNA ligase.